A 431-amino-acid chain; its full sequence is MNPTLAVLGAGAKAVAVAAKASVLRDMGVDVPDVIAVERIGVGANWQASGGWTDGAHRLGTSPEKDVGFPYRSALVPRRNAELDERMTRYSWQSYLIATASFAEWIDRGRPAPTHRRWSQYLAWVADHIGLKVIHGEVERLAVTGDRWALCTHETTVQADALMITGPGQAEKSLLPGNPRVLSIAQFWDRAAGHDRINAERVAVIGGGETAASMLNELFRHRVSTITVISPQVTLFTRGEGFFENSLFSDPTDWAALTFDERRDALARTDRGVFSATVQEALLADDRIHHLRGRVAHAVGRQGQIRLTLSTNRGSENFETVHGFDLVIDGSGADPLWFTSLFSQHTLDLLELGLGGPLTADRLQEAIGYDLAVTDVTPKLFLPTLSGLTQGPGFPNLSCLGLLSDRVLGAGIFTPTKHNDTRRSGEHQSFR.

Residues 1–21 form the signal peptide; it reads MNPTLAVLGAGAKAVAVAAKA.

It belongs to the lysine N(6)-hydroxylase/L-ornithine N(5)-oxygenase family. FAD is required as a cofactor.

The enzyme catalyses L-lysine + NADPH + O2 = N(6)-hydroxy-L-lysine + NADP(+) + H2O. Its pathway is siderophore biosynthesis; mycobactin biosynthesis. Its function is as follows. Flavoprotein monooxygenase required for N-hydroxylation of the two acylated lysine residues during mycobactin assembly, thus producing the hydroxamate groups necessary for iron sequestration. Is also able, but less efficiently, to hydroxylate L-lysine (non acylated) in vitro. This Mycobacterium bovis (strain ATCC BAA-935 / AF2122/97) protein is L-lysine N6-monooxygenase MbtG (mbtG).